The primary structure comprises 156 residues: Calmodulin (156 aa).

Serine 2 bears the N-acetylserine mark. 4 EF-hand domains span residues 15–50, 51–86, 88–123, and 124–156; these read EQIA…LGQN, PTEA…KMKD, DSEE…LGEK, and LTDE…MTSK. Residues aspartate 28, aspartate 30, aspartate 32, threonine 34, glutamate 39, aspartate 64, aspartate 66, asparagine 68, threonine 70, glutamate 75, aspartate 101, aspartate 103, asparagine 105, and glutamate 112 each contribute to the Ca(2+) site. Residue lysine 123 is modified to N6,N6,N6-trimethyllysine. Positions 137, 139, 141, 143, and 148 each coordinate Ca(2+).

This sequence belongs to the calmodulin family.

Its function is as follows. Calmodulin mediates the control of a large number of enzymes, ion channels and other proteins by Ca(2+). Among the enzymes to be stimulated by the calmodulin-Ca(2+) complex are a number of protein kinases and phosphatases. The protein is Calmodulin of Strongylocentrotus intermedius (Sea urchin).